A 1051-amino-acid polypeptide reads, in one-letter code: MGPGPRCAPGDPGWMLGALALMVAASGRFAFAFNLDTRFLVVKEAVNPGSLFGYSVALHRQTERQQRYLLLAGAPRDLSVADGYTNRTGAVYLCPLTALKDDCERMDISEKSDPDHHIIEDMWLGVTVASQGPAGRVLVCAHRYTQVLWSGMEDQRRMVGKCYVRGNDLQLDPGDDWQTYHNEMCNSNTDYLQTGMCQLGTSGGFTQNTVYFGAPGAYNWKGNSYMIQRKDWDLSEYSYKGSEDQGNLYIGYTVQVGSAVLHPTYITVVAGAPRHQHMGAVFLLSQESGGDLKRKQVLEGTQVGAYFGSAIALADLNNDGWQDLLVGAPYYFERKEEVGGAVYVFMNQAGTSFPDQPSLLLHGPSRSAFGISIASIGDINQDGFQDIAVGAPFEGLGKVYIYHSSSGGLLRQPQQIVHGDKLGLPGLSTFGYSLSGKMDVDDNSYPDLLVGSLSDHIVLLRARPVINILQRTLVARPAVLDPSLCTPTSCVQVELCFAYNQSAGNPSYRRNITLAYTLEADRDRRPPRLRFARSQSAVFHGFLSMPETHCQTLELLLMDNVRDKLRPIVIAMNYSLPLRMPDRLKLGMRSLDAYPVLNQAQALENHTEVHFQKECGPDNKCDSNLQMRAAFVSEQLQPLSRLQYSRDTKKLFLSINVTNTPSRERAGEDAHEALLTLEVPPALLLSSVRPSGTCQANETILCELGNPFKRNQRMELLIAFEVIGVTLHTRDLKAQLQLSTSSHQDNLQPMTLILQVDYTLQASLSLMTHRLQSFFGGTVMGEAGMKTVEDVGSPLKYEFQVSPVGDGLAALGTLVLGLEWPYEVTNGKWLLYPTEIIIHSNESWPCQPPGNLVNPLNLILSDPGDKPHSPQRRRRQLDPGGDQGSPPVTLAAAKKAKSETVLTCASGRARCVWLECPIPDTSNVTNVTVKARVWNSTFIEDYRDFDRVRVDGWATLFLRTSIPTINMENKTTWFSVDIDSELVEELPAEIELWLVLVAVSAGLLLLGLIIILLWKCGFFKRARTRALYEAKRQKAEMKSQPSETERLTDDY.

The signal sequence occupies residues methionine 1–alanine 32. The Extracellular segment spans residues phenylalanine 33 to glutamate 991. FG-GAP repeat units follow at residues arginine 38–cysteine 103, glutamate 110–leucine 171, cysteine 185–serine 235, glutamate 236–leucine 292, lysine 293–proline 354, glutamine 356–arginine 411, and glutamine 415–proline 477. A glycan (N-linked (GlcNAc...) asparagine) is linked at asparagine 86. 3 disulfide bridges follow: cysteine 94/cysteine 103, cysteine 140/cysteine 162, and cysteine 185/cysteine 197. Ca(2+) contacts are provided by aspartate 315, asparagine 317, aspartate 319, aspartate 323, aspartate 378, asparagine 380, aspartate 382, aspartate 386, aspartate 439, aspartate 441, asparagine 443, tyrosine 445, and aspartate 447. 2 disulfide bridges follow: cysteine 485/cysteine 490 and cysteine 496/cysteine 550. 4 N-linked (GlcNAc...) asparagine glycosylation sites follow: asparagine 500, asparagine 511, asparagine 573, and asparagine 605. Cysteine 615 and cysteine 621 are joined by a disulfide. N-linked (GlcNAc...) asparagine glycans are attached at residues asparagine 656, asparagine 697, and asparagine 841. A disulfide bridge connects residues cysteine 694 and cysteine 702. Cystine bridges form between cysteine 846–cysteine 904 and cysteine 911–cysteine 916. The disordered stretch occupies residues leucine 860 to valine 888. Residues asparagine 923, asparagine 926, asparagine 935, and asparagine 969 are each glycosylated (N-linked (GlcNAc...) asparagine). Residues leucine 992–phenylalanine 1019 form a helical membrane-spanning segment. Positions glycine 1017–arginine 1021 match the GFFKR motif motif. Topologically, residues lysine 1020–tyrosine 1051 are cytoplasmic.

The protein belongs to the integrin alpha chain family. In terms of assembly, heterodimer of an alpha and a beta subunit. The alpha subunit is composed of a heavy and a light chain linked by a disulfide bond. Alpha-3 associates with beta-1. Interacts with HPS5. Interacts with FAP (seprase); the interaction occurs at the cell surface of invadopodia membrane in a collagen-dependent manner. Isoform 1, but not isoform 2, is phosphorylated on serine residues.

The protein resides in the cell membrane. It is found in the cell projection. The protein localises to the invadopodium membrane. It localises to the filopodium membrane. In terms of biological role, integrin alpha-3/beta-1 is a receptor for fibronectin, laminin, collagen, epiligrin, thrombospondin and CSPG4. Integrin alpha-3/beta-1 provides a docking site for FAP (seprase) at invadopodia plasma membranes in a collagen-dependent manner and hence may participate in the adhesion, formation of invadopodia and matrix degradation processes, promoting cell invasion. Alpha-3/beta-1 may mediate with LGALS3 the stimulation by CSPG4 of endothelial cells migration. The sequence is that of Integrin alpha-3 (ITGA3) from Cricetulus griseus (Chinese hamster).